The following is a 432-amino-acid chain: Adenylosuccinate synthetase (432 aa).

Residues 13–19 (GDEGKGK) and 41–43 (GHT) each bind GTP. The Proton acceptor role is filled by aspartate 14. Residues aspartate 14 and glycine 41 each contribute to the Mg(2+) site. IMP is bound by residues 14–17 (DEGK), 39–42 (NAGH), threonine 130, arginine 144, glutamine 225, threonine 240, and arginine 304. The Proton donor role is filled by histidine 42. 300–306 (ATTGRRR) is a binding site for substrate. Residues arginine 306, 332–334 (KLD), and 415–417 (STG) each bind GTP.

It belongs to the adenylosuccinate synthetase family. In terms of assembly, homodimer. It depends on Mg(2+) as a cofactor.

The protein localises to the cytoplasm. The catalysed reaction is IMP + L-aspartate + GTP = N(6)-(1,2-dicarboxyethyl)-AMP + GDP + phosphate + 2 H(+). It participates in purine metabolism; AMP biosynthesis via de novo pathway; AMP from IMP: step 1/2. In terms of biological role, plays an important role in the de novo pathway of purine nucleotide biosynthesis. Catalyzes the first committed step in the biosynthesis of AMP from IMP. The protein is Adenylosuccinate synthetase of Salmonella agona (strain SL483).